The sequence spans 124 residues: Small ribosomal subunit protein uS12 (124 aa).

The residue at position 90 (Asp-90) is a 3-methylthioaspartic acid.

The protein belongs to the universal ribosomal protein uS12 family. In terms of assembly, part of the 30S ribosomal subunit. Contacts proteins S8 and S17. May interact with IF1 in the 30S initiation complex.

In terms of biological role, with S4 and S5 plays an important role in translational accuracy. Functionally, interacts with and stabilizes bases of the 16S rRNA that are involved in tRNA selection in the A site and with the mRNA backbone. Located at the interface of the 30S and 50S subunits, it traverses the body of the 30S subunit contacting proteins on the other side and probably holding the rRNA structure together. The combined cluster of proteins S8, S12 and S17 appears to hold together the shoulder and platform of the 30S subunit. The polypeptide is Small ribosomal subunit protein uS12 (Wolbachia sp. subsp. Drosophila simulans (strain wRi)).